The sequence spans 480 residues: MNALKERKEAFVSGLEGGSIAEINLVTTVALTAYFGWQLLNRRLDSVPLVVDFLLNWAGLLLSITVYANDPVLLNLLIAVPCIVQLQILGRSSQRKTQPQKGKESARLGLDRKPFITAYRGGMLIITCLAILAVDFPVFPRRFAKVETWGTSLMDLGVGSFVFSNGLVAASALLKQEISGQRPPLWSRLVSSVRSAGILLALGVARLVSVKGLEYQEHVTEYGTSWNFFFTLALVPLAMILVDPICTYVPRVFIALLLSVFSEYLLQKEGFLQFMIMSKRDNFFNSNREGILSFLGYCAIFLLGQNTGFYVLGNRPTVNNLYRPSGQSWQQNRRQRLSAWDKWTSVTPLAGLLAWFFITVALFQLTMAYHPYTVSRRFANLPYVLWVAAYNLGFLSMYCMVDSLFNLSQHSNNVPVTLDAVNSNGLFVFLLANCLTGLINMNMNTLDSTLTVQIAALFGYATVIASVAIIMYKCRIFIKL.

The next 11 helical transmembrane spans lie at 20 to 40 (IAEI…WQLL), 47 to 67 (VPLV…ITVY), 70 to 90 (DPVL…QILG), 114 to 134 (PFIT…ILAV), 153 to 173 (LMDL…ASAL), 186 to 208 (WSRL…ARLV), 228 to 248 (FFFT…ICTY), 252 to 272 (VFIA…EGFL), 291 to 311 (ILSF…GFYV), 343 to 363 (WTSV…VALF), and 381 to 401 (LPYV…YCMV). N-linked (GlcNAc...) asparagine glycosylation occurs at Asn-406. Helical transmembrane passes span 426–446 (LFVF…MNTL) and 450–470 (LTVQ…VAII).

Belongs to the PIGW family.

The protein localises to the endoplasmic reticulum membrane. The protein operates within glycolipid biosynthesis; glycosylphosphatidylinositol-anchor biosynthesis. Functionally, probable acetyltransferase, which acetylates the inositol ring of phosphatidylinositol during biosynthesis of GPI-anchor. The polypeptide is GPI-anchored wall transfer protein 1 (GWT1) (Eremothecium gossypii (strain ATCC 10895 / CBS 109.51 / FGSC 9923 / NRRL Y-1056) (Yeast)).